A 386-amino-acid polypeptide reads, in one-letter code: Synaptotagmin-5 (386 aa).

The segment covering 1-16 (MFPEPPTPGSPAPETP) has biased composition (pro residues). Residues 1–21 (MFPEPPTPGSPAPETPPDSSR) are disordered. Residues 1–24 (MFPEPPTPGSPAPETPPDSSRIRQ) lie on the Vesicular side of the membrane. The chain crosses the membrane as a helical span at residues 25–45 (GAVPAWVLATILLGSGLLVFS). Topologically, residues 46–386 (SCFCLYRKRC…PDRARPIPAP (341 aa)) are cytoplasmic. C2 domains follow at residues 108 to 227 (QLGR…QAWR) and 239 to 372 (KLGD…AQWH). Leucine 138, aspartate 139, aspartate 145, aspartate 197, phenylalanine 198, aspartate 199, serine 202, aspartate 205, aspartate 270, aspartate 276, aspartate 330, and aspartate 332 together coordinate Ca(2+).

The protein belongs to the synaptotagmin family. As to quaternary structure, homodimer. Interacts with both alpha- and beta-tubulin. The cofactor is Ca(2+). In terms of tissue distribution, expressed in kidney, adipose tissue, lung and heart, as well as at higher levels in brain.

Its subcellular location is the cytoplasmic vesicle. It is found in the secretory vesicle. The protein resides in the synaptic vesicle membrane. The protein localises to the recycling endosome membrane. Functionally, may be involved in Ca(2+)-dependent exocytosis of secretory vesicles through Ca(2+) and phospholipid binding to the C2 domain or may serve as Ca(2+) sensors in the process of vesicular trafficking and exocytosis. Regulates the Ca(2+)-dependent secretion of norepinephrine in PC12 cells. Required for export from the endocytic recycling compartment to the cell surface. The sequence is that of Synaptotagmin-5 (Syt5) from Rattus norvegicus (Rat).